We begin with the raw amino-acid sequence, 426 residues long: Chaperone SurA (426 aa).

Positions 1–19 (MGRVLVTIFVLFWPIGSFA) are cleaved as a signal peptide. PpiC domains follow at residues 169–270 (DAQY…KLLD) and 280–379 (VTQT…QVLD).

It is found in the periplasm. The catalysed reaction is [protein]-peptidylproline (omega=180) = [protein]-peptidylproline (omega=0). Its function is as follows. Chaperone involved in the correct folding and assembly of outer membrane proteins. Recognizes specific patterns of aromatic residues and the orientation of their side chains, which are found more frequently in integral outer membrane proteins. May act in both early periplasmic and late outer membrane-associated steps of protein maturation. This chain is Chaperone SurA, found in Nitrosococcus oceani (strain ATCC 19707 / BCRC 17464 / JCM 30415 / NCIMB 11848 / C-107).